A 21-amino-acid chain; its full sequence is Alpha-aminoadipic semialdehyde dehydrogenase (21 aa).

Belongs to the aldehyde dehydrogenase family. In terms of assembly, homotetramer.

The enzyme catalyses (S)-2-amino-6-oxohexanoate + NADP(+) + H2O = L-2-aminoadipate + NADPH + 2 H(+). It catalyses the reaction (S)-2-amino-6-oxohexanoate + NAD(+) + H2O = L-2-aminoadipate + NADH + 2 H(+). The chain is Alpha-aminoadipic semialdehyde dehydrogenase (aldh7a1) from Ctenopharyngodon idella (Grass carp).